The primary structure comprises 294 residues: Bifunctional protein FolD (294 aa).

NADP(+) contacts are provided by residues 175-177 and isoleucine 241; that span reads GAS.

This sequence belongs to the tetrahydrofolate dehydrogenase/cyclohydrolase family. Homodimer.

The enzyme catalyses (6R)-5,10-methylene-5,6,7,8-tetrahydrofolate + NADP(+) = (6R)-5,10-methenyltetrahydrofolate + NADPH. It catalyses the reaction (6R)-5,10-methenyltetrahydrofolate + H2O = (6R)-10-formyltetrahydrofolate + H(+). It participates in one-carbon metabolism; tetrahydrofolate interconversion. Functionally, catalyzes the oxidation of 5,10-methylenetetrahydrofolate to 5,10-methenyltetrahydrofolate and then the hydrolysis of 5,10-methenyltetrahydrofolate to 10-formyltetrahydrofolate. The protein is Bifunctional protein FolD of Hahella chejuensis (strain KCTC 2396).